The primary structure comprises 147 residues: Cytochrome c-type biogenesis protein CcmE (147 aa).

Residues 1–9 (MKSLKKKRR) lie on the Cytoplasmic side of the membrane. Residues 10-30 (IQILVAAAVALVLAVGLIGYG) traverse the membrane as a helical; Signal-anchor for type II membrane protein segment. At 31 to 147 (FRDGINLYRS…EQGVYQEPNS (117 aa)) the chain is on the periplasmic side. Residues H123 and Y127 each coordinate heme.

Belongs to the CcmE/CycJ family.

It localises to the cell inner membrane. Its function is as follows. Heme chaperone required for the biogenesis of c-type cytochromes. Transiently binds heme delivered by CcmC and transfers the heme to apo-cytochromes in a process facilitated by CcmF and CcmH. The protein is Cytochrome c-type biogenesis protein CcmE of Paracoccus denitrificans (strain Pd 1222).